A 319-amino-acid chain; its full sequence is Major intracellular serine protease (319 aa).

Residues 1 to 17 constitute a propeptide that is removed on maturation; the sequence is MNGEIRLIPYVTNEQIM. The region spanning 23-307 is the Peptidase S8 domain; that stretch reads PEGIKVIKAP…FLYLTAPDEL (285 aa). Residues Asp50, His87, and Ser246 each act as charge relay system in the active site.

It belongs to the peptidase S8 family. Homodimer.

Its subcellular location is the cytoplasm. In terms of biological role, major intracellular protease produced by Bacillus subtilis. This is Major intracellular serine protease (isp) from Bacillus subtilis (strain 168).